A 672-amino-acid polypeptide reads, in one-letter code: DNA ligase (672 aa).

NAD(+)-binding positions include 32-36 (DAEYD), 81-82 (SL), and Glu113. The active-site N6-AMP-lysine intermediate is Lys115. Positions 136, 173, 290, and 314 each coordinate NAD(+). Zn(2+) is bound by residues Cys408, Cys411, Cys426, and Cys432. In terms of domain architecture, BRCT spans 592–672 (EIDSPFAGKT…EMIRLLGESS (81 aa)).

It belongs to the NAD-dependent DNA ligase family. LigA subfamily. It depends on Mg(2+) as a cofactor. The cofactor is Mn(2+).

The enzyme catalyses NAD(+) + (deoxyribonucleotide)n-3'-hydroxyl + 5'-phospho-(deoxyribonucleotide)m = (deoxyribonucleotide)n+m + AMP + beta-nicotinamide D-nucleotide.. DNA ligase that catalyzes the formation of phosphodiester linkages between 5'-phosphoryl and 3'-hydroxyl groups in double-stranded DNA using NAD as a coenzyme and as the energy source for the reaction. It is essential for DNA replication and repair of damaged DNA. The protein is DNA ligase of Yersinia enterocolitica serotype O:8 / biotype 1B (strain NCTC 13174 / 8081).